The sequence spans 194 residues: Imidazoleglycerol-phosphate dehydratase (194 aa).

It belongs to the imidazoleglycerol-phosphate dehydratase family.

The protein localises to the cytoplasm. It carries out the reaction D-erythro-1-(imidazol-4-yl)glycerol 3-phosphate = 3-(imidazol-4-yl)-2-oxopropyl phosphate + H2O. The protein operates within amino-acid biosynthesis; L-histidine biosynthesis; L-histidine from 5-phospho-alpha-D-ribose 1-diphosphate: step 6/9. In Caldanaerobacter subterraneus subsp. tengcongensis (strain DSM 15242 / JCM 11007 / NBRC 100824 / MB4) (Thermoanaerobacter tengcongensis), this protein is Imidazoleglycerol-phosphate dehydratase.